The primary structure comprises 423 residues: Imidazolonepropionase (423 aa).

The Fe(3+) site is built by histidine 78 and histidine 80. Positions 78 and 80 each coordinate Zn(2+). 4-imidazolone-5-propanoate is bound by residues arginine 87, tyrosine 150, and histidine 183. Tyrosine 150 is a binding site for N-formimidoyl-L-glutamate. Position 247 (histidine 247) interacts with Fe(3+). Position 247 (histidine 247) interacts with Zn(2+). Glutamate 250 lines the 4-imidazolone-5-propanoate pocket. Aspartate 322 contributes to the Fe(3+) binding site. Zn(2+) is bound at residue aspartate 322. N-formimidoyl-L-glutamate-binding residues include asparagine 324 and glycine 326. Residue serine 327 participates in 4-imidazolone-5-propanoate binding.

Belongs to the metallo-dependent hydrolases superfamily. HutI family. Zn(2+) is required as a cofactor. It depends on Fe(3+) as a cofactor.

Its subcellular location is the cytoplasm. The enzyme catalyses 4-imidazolone-5-propanoate + H2O = N-formimidoyl-L-glutamate. It participates in amino-acid degradation; L-histidine degradation into L-glutamate; N-formimidoyl-L-glutamate from L-histidine: step 3/3. Catalyzes the hydrolytic cleavage of the carbon-nitrogen bond in imidazolone-5-propanoate to yield N-formimidoyl-L-glutamate. It is the third step in the universal histidine degradation pathway. The chain is Imidazolonepropionase from Bacillus cereus (strain G9842).